Here is a 63-residue protein sequence, read N- to C-terminus: uncharacterized protein (63 aa).

The signal sequence occupies residues 1 to 18; it reads MLNSEHFNLIQRALDATA.

This is an uncharacterized protein from Bacillus subtilis (strain 168).